The sequence spans 561 residues: MEKILVTLSTGAASIAVLAVLFTIPSLYNTINEVHDEVLDGVSVFRVETDSAWTEMMDIQITVTPPTKPRVNPFNSIFRQKRQTFSGLPAWCQCEPTKPTCPPGPPGPPGQPGQPGTPGAPGPKGEDNTSTYAPITCAPVSQDCVKCPQGPAGPEGPAGPAGPAGPDGQPGAPGNAGNPGSDGQPGAPGDDGQPGAPGQDGQPGAPGQDGQRGSGAPGAPGAPGNAGPAGPAGQDGAPGQDGQPGPAGPAGQDGAPGNAGSDGQPGAPGGPGLPGNDAAYCACPHGEDSCDHLYRSCLPRCFGEVLDGVSVFRVETDSAWTEMMDIQVTVTPPTKPRVNPFNSVFRQKRQTFSGLPAWCQCEPTKPTCPPGPPGPPGQPGQPGTPGAPGPKGEDNTATYAPITCAPVSQDCVKCPQGPAGPTGPAGLAGPAGPDGQPGFPGQRGNDGFPGAPGAPGDNGQPGAPGQDGFPGQPGADGQRGSGAPGAPGAPGNAGPAGPAGQDGFPGQDGQPGPAGPAGQDGFPGNAGSDGQPGAPGGPGLPGNDAAYCACPPRSAVFLSRH.

The N-terminal stretch at 1 to 30 (MEKILVTLSTGAASIAVLAVLFTIPSLYNT) is a signal peptide. Residues 100-112 (TCPPGPPGPPGQP) show a composition bias toward pro residues. Disordered regions lie at residues 100–134 (TCPPGPPGPPGQPGQPGTPGAPGPKGEDNTSTYAP), 148–271 (PQGP…PGGP), 367–398 (TCPPGPPGPPGQPGQPGTPGAPGPKGEDNTAT), and 422–540 (TGPA…GPGL). 2 triple-helical region regions span residues 102–127 (PPGPPGPPGQPGQPGTPGAPGPKGED) and 153–276 (GPEG…LPGN). 2 stretches are compositionally biased toward low complexity: residues 164–209 (AGPD…PGQD) and 219–265 (APGA…DGQP). Over residues 367–379 (TCPPGPPGPPGQP) the composition is skewed to pro residues. Residues 413–544 (KCPQGPAGPT…PGGPGLPGND (132 aa)) are triple-helical region. Composition is skewed to low complexity over residues 422–467 (TGPA…PGQD) and 486–532 (APGA…DGQP). Residues 485–543 (GAPGAPGNAGPAGPAGQDGFPGQDGQPGPAGPAGQDGFPGNAGSDGQPGAPGGPGLPGN) enclose the Collagen-like domain.

Belongs to the cuticular collagen family. As to quaternary structure, collagen polypeptide chains are complexed within the cuticle by disulfide bonds and other types of covalent cross-links.

Its function is as follows. Nematode cuticles are composed largely of collagen-like proteins. The cuticle functions both as an exoskeleton and as a barrier to protect the worm from its environment. This is Putative cuticle collagen 145 from Caenorhabditis briggsae.